A 252-amino-acid polypeptide reads, in one-letter code: tRNA pseudouridine synthase A (252 aa).

Asp54 acts as the Nucleophile in catalysis. Tyr113 is a binding site for substrate.

This sequence belongs to the tRNA pseudouridine synthase TruA family. In terms of assembly, homodimer.

The catalysed reaction is uridine(38/39/40) in tRNA = pseudouridine(38/39/40) in tRNA. Formation of pseudouridine at positions 38, 39 and 40 in the anticodon stem and loop of transfer RNAs. This chain is tRNA pseudouridine synthase A, found in Bacteroides fragilis (strain ATCC 25285 / DSM 2151 / CCUG 4856 / JCM 11019 / LMG 10263 / NCTC 9343 / Onslow / VPI 2553 / EN-2).